Here is a 107-residue protein sequence, read N- to C-terminus: Lipid-anchored protein YDL012C (107 aa).

Over residues 1 to 18 (MSAQDYYGNSASKQSYSR) the composition is skewed to polar residues. Residues 1 to 86 (MSAQDYYGNS…VQQQPASSGN (86 aa)) form a disordered region. Position 2 is an N-acetylserine (S2). K13 participates in a covalent cross-link: Glycyl lysine isopeptide (Lys-Gly) (interchain with G-Cter in ubiquitin). Residues 35-81 (PSQSQQNYYPPQQQQQQYQQQPQYYQQQQPQYYQQHPQQPIYVQQQP) show a composition bias toward low complexity.

This sequence belongs to the CYSTM1 family.

It localises to the cell membrane. The protein is Lipid-anchored protein YDL012C of Saccharomyces cerevisiae (strain ATCC 204508 / S288c) (Baker's yeast).